A 337-amino-acid polypeptide reads, in one-letter code: 1-aminocyclopropane-1-carboxylate deaminase (337 aa).

Lys50 carries the post-translational modification N6-(pyridoxal phosphate)lysine. Residue Ser77 is the Nucleophile of the active site.

The protein belongs to the ACC deaminase/D-cysteine desulfhydrase family. As to quaternary structure, homotrimer. Pyridoxal 5'-phosphate is required as a cofactor.

The catalysed reaction is 1-aminocyclopropane-1-carboxylate + H2O = 2-oxobutanoate + NH4(+). Its function is as follows. Catalyzes a cyclopropane ring-opening reaction, the irreversible conversion of 1-aminocyclopropane-1-carboxylate (ACC) to ammonia and alpha-ketobutyrate. Allows growth on ACC as a nitrogen source. In Rhizobium rhizogenes (strain K84 / ATCC BAA-868) (Agrobacterium radiobacter), this protein is 1-aminocyclopropane-1-carboxylate deaminase.